Consider the following 76-residue polypeptide: Probable small nuclear ribonucleoprotein G (76 aa).

The Sm domain occupies 4–76 (AHPPEVKKYM…IVMVEALDRV (73 aa)).

This sequence belongs to the snRNP Sm proteins family. As to quaternary structure, interacts with the SMN complex. Core component of the spliceosomal U1, U2, U4 and U5 small nuclear ribonucleoproteins (snRNPs), the building blocks of the spliceosome. Most spliceosomal snRNPs contain a common set of Sm proteins, SNRPB, SNRPD1, SNRPD2, SNRPD3, SNRPE, SNRPF and SNRPG that assemble in a heptameric protein ring on the Sm site of the small nuclear RNA to form the core snRNP. Component of the U1 snRNP. Component of the U4/U6-U5 tri-snRNP complex. Component of the U7 snRNP complex. Component of the U11/U12 snRNPs that are part of the U12-type spliceosome.

The protein localises to the cytoplasm. It localises to the cytosol. It is found in the nucleus. Its function is as follows. Plays a role in pre-mRNA splicing as a core component of the spliceosomal U1, U2, U4 and U5 small nuclear ribonucleoproteins (snRNPs), the building blocks of the spliceosome. Component of both the pre-catalytic spliceosome B complex and activated spliceosome C complexes. Is also a component of the minor U12 spliceosome. This chain is Probable small nuclear ribonucleoprotein G, found in Drosophila melanogaster (Fruit fly).